The following is a 101-amino-acid chain: NADH-quinone oxidoreductase subunit K (101 aa).

A run of 3 helical transmembrane segments spans residues 4 to 24, 30 to 50, and 61 to 81; these read LAHYLVLGAILFAISIVGIFL, IIILMAIELMLLAVNTNFVAF, and IFVFFVLTVAAAEAAIGLAIL.

The protein belongs to the complex I subunit 4L family. In terms of assembly, NDH-1 is composed of 14 different subunits. Subunits NuoA, H, J, K, L, M, N constitute the membrane sector of the complex.

Its subcellular location is the cell inner membrane. It catalyses the reaction a quinone + NADH + 5 H(+)(in) = a quinol + NAD(+) + 4 H(+)(out). Functionally, NDH-1 shuttles electrons from NADH, via FMN and iron-sulfur (Fe-S) centers, to quinones in the respiratory chain. The immediate electron acceptor for the enzyme in this species is believed to be ubiquinone. Couples the redox reaction to proton translocation (for every two electrons transferred, four hydrogen ions are translocated across the cytoplasmic membrane), and thus conserves the redox energy in a proton gradient. The chain is NADH-quinone oxidoreductase subunit K from Paraburkholderia phymatum (strain DSM 17167 / CIP 108236 / LMG 21445 / STM815) (Burkholderia phymatum).